The following is a 163-amino-acid chain: ATP synthase subunit b', chloroplastic (163 aa).

Residues 26 to 46 (ATLPLMAVQILLFMVILNAVF) form a helical membrane-spanning segment.

It belongs to the ATPase B chain family. F-type ATPases have 2 components, F(1) - the catalytic core - and F(0) - the membrane proton channel. F(1) has five subunits: alpha(3), beta(3), gamma(1), delta(1), epsilon(1). F(0) has four main subunits: a(1), b(1), b'(1) and c(10-14). The alpha and beta chains form an alternating ring which encloses part of the gamma chain. F(1) is attached to F(0) by a central stalk formed by the gamma and epsilon chains, while a peripheral stalk is formed by the delta, b and b' chains.

Its subcellular location is the plastid. It is found in the chloroplast thylakoid membrane. Its function is as follows. F(1)F(0) ATP synthase produces ATP from ADP in the presence of a proton or sodium gradient. F-type ATPases consist of two structural domains, F(1) containing the extramembraneous catalytic core and F(0) containing the membrane proton channel, linked together by a central stalk and a peripheral stalk. During catalysis, ATP synthesis in the catalytic domain of F(1) is coupled via a rotary mechanism of the central stalk subunits to proton translocation. Component of the F(0) channel, it forms part of the peripheral stalk, linking F(1) to F(0). The b'-subunit is a diverged and duplicated form of b found in plants and photosynthetic bacteria. In Guillardia theta (Cryptophyte), this protein is ATP synthase subunit b', chloroplastic.